The sequence spans 208 residues: RNA chaperone ProQ (208 aa).

Basic and acidic residues-rich tracts occupy residues 99–115 (AQET…EKNK) and 126–135 (PAKDKPENTA). Residues 99–149 (AQETLKESKAKVAEKNKATNKAAAKKAPAKDKPENTAKAKPKTAKKPAKPK) form a disordered region. Positions 137 to 149 (AKPKTAKKPAKPK) are enriched in basic residues.

This sequence belongs to the ProQ family.

Its subcellular location is the cytoplasm. In terms of biological role, RNA chaperone with significant RNA binding, RNA strand exchange and RNA duplexing activities. This is RNA chaperone ProQ from Idiomarina loihiensis (strain ATCC BAA-735 / DSM 15497 / L2-TR).